The primary structure comprises 522 residues: Apolipoprotein N-acyltransferase (522 aa).

The next 6 helical transmembrane spans lie at 17–37 (YFTY…FSPF), 61–81 (TALL…VSWL), 98–118 (FLVG…TYLV), 127–147 (VIFA…FTGF), 164–184 (IAPI…SAVI), and 197–217 (LKLV…SAYS). The 248-residue stretch at 236–483 (AQGNIEQNLK…ETTLTYKIAP (248 aa)) folds into the CN hydrolase domain. E276 serves as the catalytic Proton acceptor. K342 is a catalytic residue. C394 acts as the Nucleophile in catalysis. A helical membrane pass occupies residues 495-515 (NMPLYALSLLFLLLHSMMAFI).

This sequence belongs to the CN hydrolase family. Apolipoprotein N-acyltransferase subfamily.

It is found in the cell inner membrane. It catalyses the reaction N-terminal S-1,2-diacyl-sn-glyceryl-L-cysteinyl-[lipoprotein] + a glycerophospholipid = N-acyl-S-1,2-diacyl-sn-glyceryl-L-cysteinyl-[lipoprotein] + a 2-acyl-sn-glycero-3-phospholipid + H(+). The protein operates within protein modification; lipoprotein biosynthesis (N-acyl transfer). Its function is as follows. Catalyzes the phospholipid dependent N-acylation of the N-terminal cysteine of apolipoprotein, the last step in lipoprotein maturation. In Haemophilus influenzae (strain ATCC 51907 / DSM 11121 / KW20 / Rd), this protein is Apolipoprotein N-acyltransferase.